A 358-amino-acid polypeptide reads, in one-letter code: Neuronal-specific septin-3 (358 aa).

The segment covering 1–10 (MSKGLPEART) has biased composition (basic and acidic residues). Residues 1 to 29 (MSKGLPEARTDTAMSELVPEPRPKPAVPM) are disordered. In terms of domain architecture, Septin-type G spans 58 to 331 (TGFDFNIMVV…ETYRAKRLND (274 aa)). Positions 68–75 (GQSGLGKS) are G1 motif. GTP is bound at residue 68-75 (GQSGLGKS). Ser-91 is subject to Phosphoserine. Thr-102 provides a ligand contact to GTP. The tract at residues 125 to 128 (DTPG) is G3 motif. The G4 motif stretch occupies residues 207–210 (AKAD). GTP-binding positions include 208-216 (KADTMTLEE), Gly-265, and Arg-280.

The protein belongs to the TRAFAC class TrmE-Era-EngA-EngB-Septin-like GTPase superfamily. Septin GTPase family. Septins polymerize into heterooligomeric protein complexes that form filaments, and can associate with cellular membranes, actin filaments and microtubules. GTPase activity is required for filament formation. In terms of processing, phosphorylated by PKG on serine residues. Phosphorylated by PKG on Ser-91. In terms of tissue distribution, brain-specific, with highest expression in the hippocampal CA3 region (at protein level).

Its subcellular location is the cytoplasm. The protein resides in the cytoskeleton. It localises to the synapse. Its function is as follows. Filament-forming cytoskeletal GTPase. May play a role in cytokinesis (Potential). In Rattus norvegicus (Rat), this protein is Neuronal-specific septin-3.